A 1204-amino-acid chain; its full sequence is Cingulin (1204 aa).

Residues Met7–Ala359 are head. The segment at Glu25–Ala48 is disordered. A ZIM motif is present at residues Ala48–Gly62. The segment at Ala54–Val67 is interaction with TJP1/ZO1. Residues Leu68–Arg269 form a disordered region. Residues Ser95, Ser96, Ser98, Ser135, Ser137, Ser140, Ser155, and Ser165 each carry the phosphoserine modification. Residues Thr126–Ser140 show a composition bias toward polar residues. The span at Pro166–Arg190 shows a compositional bias: polar residues. Residues Glu207–Ser231 show a composition bias toward basic and acidic residues. Phosphoserine is present on residues Ser214, Ser217, Ser260, Ser278, Ser340, and Ser353. Positions Val360 to Ala1161 form a coiled coil. Lys581 carries the post-translational modification N6-acetyllysine. The tract at residues Asp1156–Asp1182 is disordered. The interval Ser1162–Cys1204 is tail. A phosphoserine mark is found at Ser1176 and Ser1177.

It belongs to the cingulin family. In terms of assembly, homodimer. Interacts with TJP1/ZO1 and SPEF1.

It is found in the cell junction. It localises to the tight junction. Probably plays a role in the formation and regulation of the tight junction (TJ) paracellular permeability barrier. This chain is Cingulin, found in Callithrix jacchus (White-tufted-ear marmoset).